The following is a 379-amino-acid chain: Tryptophan 2,3-dioxygenase (379 aa).

Residues F57 to H61 and R128 each bind substrate. Residue H312 participates in heme binding. T327 contributes to the substrate binding site.

Belongs to the tryptophan 2,3-dioxygenase family. In terms of assembly, homotetramer. Dimer of dimers. Requires heme as cofactor.

It catalyses the reaction L-tryptophan + O2 = N-formyl-L-kynurenine. The protein operates within amino-acid degradation; L-tryptophan degradation via kynurenine pathway; L-kynurenine from L-tryptophan: step 1/2. It functions in the pathway pigment biosynthesis; ommochrome biosynthesis. Heme-dependent dioxygenase that catalyzes the oxidative cleavage of the L-tryptophan (L-Trp) pyrrole ring and converts L-tryptophan to N-formyl-L-kynurenine. Catalyzes the oxidative cleavage of the indole moiety. This chain is Tryptophan 2,3-dioxygenase, found in Drosophila sechellia (Fruit fly).